The primary structure comprises 225 residues: Ribonuclease HII (225 aa).

One can recognise an RNase H type-2 domain in the interval 28–220 (DIIAGTDEVG…VKEYVDISQE (193 aa)). Residues D34, E35, and D129 each coordinate a divalent metal cation.

The protein belongs to the RNase HII family. Mn(2+) is required as a cofactor. Mg(2+) serves as cofactor.

It is found in the cytoplasm. The enzyme catalyses Endonucleolytic cleavage to 5'-phosphomonoester.. Endonuclease that specifically degrades the RNA of RNA-DNA hybrids. This Desulfotalea psychrophila (strain LSv54 / DSM 12343) protein is Ribonuclease HII.